The following is a 582-amino-acid chain: Aspartate--tRNA(Asp/Asn) ligase (582 aa).

Glu177 contacts L-aspartate. An aspartate region spans residues 201–204 (QLFK). L-aspartate is bound at residue Arg223. ATP contacts are provided by residues 223 to 225 (RDE) and Gln232. His447 provides a ligand contact to L-aspartate. Glu481 contacts ATP. L-aspartate is bound at residue Arg488. Residue 533–536 (GLDR) coordinates ATP.

It belongs to the class-II aminoacyl-tRNA synthetase family. Type 1 subfamily. In terms of assembly, homodimer.

The protein resides in the cytoplasm. The catalysed reaction is tRNA(Asx) + L-aspartate + ATP = L-aspartyl-tRNA(Asx) + AMP + diphosphate. In terms of biological role, aspartyl-tRNA synthetase with relaxed tRNA specificity since it is able to aspartylate not only its cognate tRNA(Asp) but also tRNA(Asn). Reaction proceeds in two steps: L-aspartate is first activated by ATP to form Asp-AMP and then transferred to the acceptor end of tRNA(Asp/Asn). The protein is Aspartate--tRNA(Asp/Asn) ligase of Chlamydia trachomatis serovar A (strain ATCC VR-571B / DSM 19440 / HAR-13).